A 113-amino-acid chain; its full sequence is Hydrogenase maturation factor HypA (113 aa).

H2 contacts Ni(2+). Zn(2+) contacts are provided by C73, C76, C89, and C92.

This sequence belongs to the HypA/HybF family.

Involved in the maturation of [NiFe] hydrogenases. Required for nickel insertion into the metal center of the hydrogenase. The chain is Hydrogenase maturation factor HypA from Rhodobacter capsulatus (Rhodopseudomonas capsulata).